The chain runs to 304 residues: UTP--glucose-1-phosphate uridylyltransferase 1 (304 aa).

Belongs to the UDPGP type 2 family.

The enzyme catalyses alpha-D-glucose 1-phosphate + UTP + H(+) = UDP-alpha-D-glucose + diphosphate. The protein operates within carbohydrate metabolism; nucleotide-sugar metabolism. The protein is UTP--glucose-1-phosphate uridylyltransferase 1 (hasC1) of Streptococcus pyogenes serotype M1.